Consider the following 452-residue polypeptide: 1,4-beta-D-glucan cellobiohydrolase A (452 aa).

Positions 1-17 are cleaved as a signal peptide; the sequence is MHQRALLFSALLTAVRA. Asn62 is a glycosylation site (N-linked (GlcNAc...) asparagine). The active-site Nucleophile is the Glu227. Catalysis depends on Glu232, which acts as the Proton donor. N-linked (GlcNAc...) asparagine glycans are attached at residues Asn285, Asn335, Asn402, and Asn445.

The protein belongs to the glycosyl hydrolase 7 (cellulase C) family.

It is found in the secreted. It catalyses the reaction Hydrolysis of (1-&gt;4)-beta-D-glucosidic linkages in cellulose and cellotetraose, releasing cellobiose from the non-reducing ends of the chains.. The biological conversion of cellulose to glucose generally requires three types of hydrolytic enzymes: (1) Endoglucanases which cut internal beta-1,4-glucosidic bonds; (2) Exocellobiohydrolases that cut the disaccharide cellobiose from the non-reducing end of the cellulose polymer chain; (3) Beta-1,4-glucosidases which hydrolyze the cellobiose and other short cello-oligosaccharides to glucose. This is 1,4-beta-D-glucan cellobiohydrolase A (cbhA) from Aspergillus niger.